A 227-amino-acid chain; its full sequence is Uracil-DNA glycosylase (227 aa).

The Proton acceptor role is filled by aspartate 64.

It belongs to the uracil-DNA glycosylase (UDG) superfamily. UNG family.

The protein localises to the cytoplasm. The enzyme catalyses Hydrolyzes single-stranded DNA or mismatched double-stranded DNA and polynucleotides, releasing free uracil.. Excises uracil residues from the DNA which can arise as a result of misincorporation of dUMP residues by DNA polymerase or due to deamination of cytosine. In Erwinia tasmaniensis (strain DSM 17950 / CFBP 7177 / CIP 109463 / NCPPB 4357 / Et1/99), this protein is Uracil-DNA glycosylase.